A 278-amino-acid polypeptide reads, in one-letter code: uncharacterized protein (278 aa).

Residues proline 127–phenylalanine 151 show a composition bias toward pro residues. Positions proline 127 to leucine 174 are disordered. A compositionally biased stretch (low complexity) spans proline 164 to leucine 174.

This is an uncharacterized protein from Botryotinia fuckeliana (Noble rot fungus).